The primary structure comprises 356 residues: S-adenosylmethionine:tRNA ribosyltransferase-isomerase (356 aa).

Belongs to the QueA family. Monomer.

The protein localises to the cytoplasm. The catalysed reaction is 7-aminomethyl-7-carbaguanosine(34) in tRNA + S-adenosyl-L-methionine = epoxyqueuosine(34) in tRNA + adenine + L-methionine + 2 H(+). The protein operates within tRNA modification; tRNA-queuosine biosynthesis. In terms of biological role, transfers and isomerizes the ribose moiety from AdoMet to the 7-aminomethyl group of 7-deazaguanine (preQ1-tRNA) to give epoxyqueuosine (oQ-tRNA). The chain is S-adenosylmethionine:tRNA ribosyltransferase-isomerase from Yersinia pseudotuberculosis serotype O:3 (strain YPIII).